Reading from the N-terminus, the 265-residue chain is Type III pantothenate kinase (265 aa).

6 to 13 (DVGNTHTV) serves as a coordination point for ATP. A substrate-binding site is contributed by 112–115 (GADR). The Proton acceptor role is filled by Asp-114. Asp-134 provides a ligand contact to K(+). Thr-137 contributes to the ATP binding site. Thr-189 serves as a coordination point for substrate.

Belongs to the type III pantothenate kinase family. Homodimer. Requires NH4(+) as cofactor. K(+) is required as a cofactor.

The protein localises to the cytoplasm. It catalyses the reaction (R)-pantothenate + ATP = (R)-4'-phosphopantothenate + ADP + H(+). It functions in the pathway cofactor biosynthesis; coenzyme A biosynthesis; CoA from (R)-pantothenate: step 1/5. Its function is as follows. Catalyzes the phosphorylation of pantothenate (Pan), the first step in CoA biosynthesis. This chain is Type III pantothenate kinase, found in Streptomyces avermitilis (strain ATCC 31267 / DSM 46492 / JCM 5070 / NBRC 14893 / NCIMB 12804 / NRRL 8165 / MA-4680).